Consider the following 311-residue polypeptide: MTLLLLGAVLLVAQPQLVPSHPAAPGPGLKQQGLLRKVIILPEDTGEGAATNGSTQQLPQTIIIGVRKGGTRALLEMLSLHPDVAAAENEVHFFDWEEHYSQGLGWYLTQMPFSSPHQLTVEKTPAYFTSPKVPERIHSMNPTIRLLLILRDPSERVLSDYTQVLYNHLQKHKPYPPIEDLLMRDGRLNVDYKALNRSLYHAHMLNWLRFFPLGHIHIVDGDRFIRDPFPEIQKVERFLKLSPQINASNFYFNKTKGFYCLRDSGKDRCLHESKGRAHPQVDPKLLDKLHEYFREPNKKFFKLVGRTFDWH.

The first 20 residues, 1 to 20 (MTLLLLGAVLLVAQPQLVPS), serve as a signal peptide directing secretion. An N-linked (GlcNAc...) asparagine glycan is attached at Asn52. 3'-phosphoadenylyl sulfate-binding positions include 68–72 (KGGTR), Arg151, and Ser159. 3 N-linked (GlcNAc...) asparagine glycosylation sites follow: Asn196, Asn246, and Asn253. Residue Tyr259 coordinates 3'-phosphoadenylyl sulfate. A disulfide bond links Cys260 and Cys269. 274–278 (KGRAH) provides a ligand contact to 3'-phosphoadenylyl sulfate.

Belongs to the sulfotransferase 1 family.

The protein resides in the golgi apparatus lumen. The enzyme catalyses alpha-D-glucosaminyl-[heparan sulfate](n) + 3'-phosphoadenylyl sulfate = 3-sulfo-alpha-D-glucosaminyl-[heparan sulfate](n) + adenosine 3',5'-bisphosphate + H(+). Functionally, sulfotransferase that utilizes 3'-phospho-5'-adenylyl sulfate (PAPS) to catalyze the transfer of a sulfo group to position 3 of glucosamine residues in heparan. Catalyzes the rate limiting step in the biosynthesis of heparan sulfate (HSact). This modification is a crucial step in the biosynthesis of anticoagulant heparan sulfate as it completes the structure of the antithrombin pentasaccharide binding site. This chain is Heparan sulfate glucosamine 3-O-sulfotransferase 1 (Hs3st1), found in Rattus norvegicus (Rat).